Reading from the N-terminus, the 229-residue chain is 2,3-bisphosphoglycerate-dependent phosphoglycerate mutase (229 aa).

Substrate contacts are provided by residues R7 to N14, T20 to G21, R59, E86 to Y89, K97, R113 to R114, and G182 to N183. The Tele-phosphohistidine intermediate role is filled by H8. The Proton donor/acceptor role is filled by E86.

The protein belongs to the phosphoglycerate mutase family. BPG-dependent PGAM subfamily.

It catalyses the reaction (2R)-2-phosphoglycerate = (2R)-3-phosphoglycerate. It participates in carbohydrate degradation; glycolysis; pyruvate from D-glyceraldehyde 3-phosphate: step 3/5. In terms of biological role, catalyzes the interconversion of 2-phosphoglycerate and 3-phosphoglycerate. The polypeptide is 2,3-bisphosphoglycerate-dependent phosphoglycerate mutase (Listeria welshimeri serovar 6b (strain ATCC 35897 / DSM 20650 / CCUG 15529 / CIP 8149 / NCTC 11857 / SLCC 5334 / V8)).